Reading from the N-terminus, the 154-residue chain is Transcriptional repressor NrdR (154 aa).

A zinc finger spans residues 3 to 34 (CPFCGHSNTQVLDTRMSEDGDAVRRRRRCEAC). The region spanning 49–139 (PAIVKKNGSR…VYRSFEDVAE (91 aa)) is the ATP-cone domain.

Belongs to the NrdR family. The cofactor is Zn(2+).

Its function is as follows. Negatively regulates transcription of bacterial ribonucleotide reductase nrd genes and operons by binding to NrdR-boxes. The chain is Transcriptional repressor NrdR from Cupriavidus pinatubonensis (strain JMP 134 / LMG 1197) (Cupriavidus necator (strain JMP 134)).